Here is a 166-residue protein sequence, read N- to C-terminus: Peroxynitrite isomerase Rv2717c (166 aa).

A GXWXGXG motif is present at residues Gly-28–Gly-34. Residues Thr-40 and His-158 each coordinate heme b.

It belongs to the nitrobindin family. Homodimer. The cofactor is heme b.

It localises to the cytoplasm. It carries out the reaction peroxynitrite = nitrate. It participates in nitrogen metabolism. In terms of biological role, heme-binding protein able to scavenge peroxynitrite and to protect free L-tyrosine against peroxynitrite-mediated nitration, by acting as a peroxynitrite isomerase that converts peroxynitrite to nitrate. Therefore, this protein likely plays a role in peroxynitrite sensing and in the detoxification of reactive nitrogen and oxygen species (RNS and ROS, respectively). Is able to bind nitric oxide (NO) in vitro, but may act as a sensor of peroxynitrite levels in vivo. The protein is Peroxynitrite isomerase Rv2717c of Arabidopsis thaliana (Mouse-ear cress).